Consider the following 573-residue polypeptide: PCNA-interacting partner (573 aa).

Residues 492-532 are disordered; that stretch reads TGGQVKNKPCKNVANKRSKRKQVDIQSETTNAQENEPPQKK. A compositionally biased stretch (polar residues) spans 515-527; it reads DIQSETTNAQENE.

Belongs to the PARI family.

It is found in the cytoplasm. The protein localises to the nucleus. Functionally, required to suppress inappropriate homologous recombination, thereby playing a central role DNA repair and in the maintenance of genomic stability. The chain is PCNA-interacting partner (parpbp) from Xenopus tropicalis (Western clawed frog).